The sequence spans 237 residues: 1-(5-phosphoribosyl)-5-[(5-phosphoribosylamino)methylideneamino] imidazole-4-carboxamide isomerase (237 aa).

The active-site Proton acceptor is the Asp8. Asp129 acts as the Proton donor in catalysis.

The protein belongs to the HisA/HisF family.

The protein localises to the cytoplasm. It catalyses the reaction 1-(5-phospho-beta-D-ribosyl)-5-[(5-phospho-beta-D-ribosylamino)methylideneamino]imidazole-4-carboxamide = 5-[(5-phospho-1-deoxy-D-ribulos-1-ylimino)methylamino]-1-(5-phospho-beta-D-ribosyl)imidazole-4-carboxamide. The protein operates within amino-acid biosynthesis; L-histidine biosynthesis; L-histidine from 5-phospho-alpha-D-ribose 1-diphosphate: step 4/9. The polypeptide is 1-(5-phosphoribosyl)-5-[(5-phosphoribosylamino)methylideneamino] imidazole-4-carboxamide isomerase (Roseiflexus sp. (strain RS-1)).